The sequence spans 153 residues: UPF0756 membrane protein lwe1581 (153 aa).

The next 4 membrane-spanning stretches (helical) occupy residues 6–26 (MLFL…SLII), 54–74 (WGVT…QIGF), 80–100 (SFKS…SILA), and 117–137 (LVFG…GPVI).

This sequence belongs to the UPF0756 family.

The protein localises to the cell membrane. The protein is UPF0756 membrane protein lwe1581 of Listeria welshimeri serovar 6b (strain ATCC 35897 / DSM 20650 / CCUG 15529 / CIP 8149 / NCTC 11857 / SLCC 5334 / V8).